Here is a 117-residue protein sequence, read N- to C-terminus: uncharacterized protein (117 aa).

Residues 1–24 form the signal peptide; it reads MMTEFGSAMTLVTGLVAYGAYVKS. A disordered region spans residues 42-117; it reads EKENFNYNNN…NNQIKRRLFD (76 aa). The segment covering 46-95 has biased composition (low complexity); that stretch reads FNYNNNNNNNNNNNNNNSNNNDNNNNNNSNSNNNNNNNNNNNNNNNNNIN. Asn61 and Asn72 each carry an N-linked (GlcNAc...) asparagine glycan. Polar residues predominate over residues 96–110; sequence DKQINGTNIFDSNNQ.

The protein localises to the secreted. This is an uncharacterized protein from Dictyostelium discoideum (Social amoeba).